A 258-amino-acid polypeptide reads, in one-letter code: Small ribosomal subunit protein uS2 (258 aa).

This sequence belongs to the universal ribosomal protein uS2 family.

This Streptococcus suis (strain 05ZYH33) protein is Small ribosomal subunit protein uS2.